A 577-amino-acid chain; its full sequence is 9-cis-epoxycarotenoid dioxygenase NCED6, chloroplastic (577 aa).

Positions 1-25 (MQHSLRSDLLPTKTSPRSHLLPQPK) are disordered. Positions 276, 325, 390, and 563 each coordinate Fe cation.

The protein belongs to the carotenoid oxygenase family. The cofactor is Fe(2+). Expressed before fertilization in male and female gametophytes, and then immediately after pollination, restricted to seed endosperm.

Its subcellular location is the plastid. It localises to the chloroplast stroma. The catalysed reaction is a 9-cis-epoxycarotenoid + O2 = a 12'-apo-carotenal + 2-cis,4-trans-xanthoxin. It carries out the reaction 9-cis-violaxanthin + O2 = (3S,5R,6S)-5,6-epoxy-3-hydroxy-5,6-dihydro-12'-apo-beta-caroten-12'-al + 2-cis,4-trans-xanthoxin. The enzyme catalyses 9'-cis-neoxanthin + O2 = (3S,5R,6R)-3,5-dihydroxy-6,7-didehydro-5,6-dihydro-12'-apo-beta-caroten-12'-al + 2-cis,4-trans-xanthoxin. Has a 11,12(11',12') 9-cis epoxycarotenoid cleavage activity. Catalyzes the first step of abscisic-acid biosynthesis from carotenoids. Contributes probably to abscisic acid synthesis for the induction of seed dormancy. The protein is 9-cis-epoxycarotenoid dioxygenase NCED6, chloroplastic (NCED6) of Arabidopsis thaliana (Mouse-ear cress).